The primary structure comprises 75 residues: MAYRESFYRFLMTQRNPGSADDIAQFANNAQHDSSFPKQEEDYEKLSDYLELNAGYLPSMSVFDKAYQLYLDNMN.

Belongs to the UPF0346 family.

This is UPF0346 protein LGAS_0911 from Lactobacillus gasseri (strain ATCC 33323 / DSM 20243 / BCRC 14619 / CIP 102991 / JCM 1131 / KCTC 3163 / NCIMB 11718 / NCTC 13722 / AM63).